The sequence spans 375 residues: Alcohol dehydrogenase 1C (375 aa).

S2 is subject to N-acetylserine. S23 carries the post-translational modification Phosphoserine. C47, H68, C98, C101, C104, C112, and C175 together coordinate Zn(2+). Residues 200–205, D224, K229, I270, 293–295, 318–320, and R370 each bind NAD(+); these read GLGGVG, VGV, and AIF.

Belongs to the zinc-containing alcohol dehydrogenase family. As to quaternary structure, dimer of identical or non-identical chains of class I alcohol dehydrogenase: ADH1A, ADH1B, and ADH1C. It depends on Zn(2+) as a cofactor. In terms of tissue distribution, expressed in kidney.

The protein resides in the cytoplasm. It carries out the reaction a primary alcohol + NAD(+) = an aldehyde + NADH + H(+). The enzyme catalyses ethanol + NAD(+) = acetaldehyde + NADH + H(+). In terms of biological role, alcohol dehydrogenase. Exhibits high activity for ethanol oxidation and plays a major role in ethanol catabolism. The protein is Alcohol dehydrogenase 1C (ADH1C) of Papio hamadryas (Hamadryas baboon).